The following is a 709-amino-acid chain: Phosphate acetyltransferase (709 aa).

Residues 389 to 709 are phosphate acetyltransferase; the sequence is EFCYRLKILS…TIALTSIQSL (321 aa).

In the N-terminal section; belongs to the CobB/CobQ family. The protein in the C-terminal section; belongs to the phosphate acetyltransferase and butyryltransferase family. In terms of assembly, homohexamer.

It is found in the cytoplasm. It catalyses the reaction acetyl-CoA + phosphate = acetyl phosphate + CoA. Its pathway is metabolic intermediate biosynthesis; acetyl-CoA biosynthesis; acetyl-CoA from acetate: step 2/2. In terms of biological role, involved in acetate metabolism. The polypeptide is Phosphate acetyltransferase (pta) (Buchnera aphidicola subsp. Schizaphis graminum (strain Sg)).